The primary structure comprises 91 residues: Small ribosomal subunit protein uS19 (91 aa).

This sequence belongs to the universal ribosomal protein uS19 family.

Functionally, protein S19 forms a complex with S13 that binds strongly to the 16S ribosomal RNA. This Prochlorococcus marinus (strain MIT 9303) protein is Small ribosomal subunit protein uS19.